The primary structure comprises 339 residues: Dual specificity protein phosphatase 12 (339 aa).

An N-acetylmethionine modification is found at Met-1. A compositionally biased stretch (polar residues) spans 1-22; it reads MLEVQSSNHGCERQAPTTSPAS. The interval 1 to 25 is disordered; that stretch reads MLEVQSSNHGCERQAPTTSPASSAG. The region spanning 26–170 is the Tyrosine-protein phosphatase domain; it reads HAVEVRPGLY…LKLYEAMGHE (145 aa). Residue Cys-114 is the Phosphocysteine intermediate of the active site. 115–120 provides a ligand contact to substrate; it reads HAGVSR. Residue Ser-334 is modified to Phosphoserine.

Belongs to the protein-tyrosine phosphatase family. Non-receptor class dual specificity subfamily. As to quaternary structure, monomer. Zn(2+) serves as cofactor.

Its subcellular location is the nucleus. It localises to the cytoplasm. The protein localises to the cytosol. It catalyses the reaction O-phospho-L-tyrosyl-[protein] + H2O = L-tyrosyl-[protein] + phosphate. The enzyme catalyses O-phospho-L-seryl-[protein] + H2O = L-seryl-[protein] + phosphate. It carries out the reaction O-phospho-L-threonyl-[protein] + H2O = L-threonyl-[protein] + phosphate. Dual specificity phosphatase; can dephosphorylate both phosphotyrosine and phosphoserine or phosphothreonine residues. Can dephosphorylate glucokinase (in vitro). Has phosphatase activity with the synthetic substrate 6,8-difluoro-4-methylumbelliferyl phosphate and other in vitro substrates. The polypeptide is Dual specificity protein phosphatase 12 (Dusp12) (Rattus norvegicus (Rat)).